We begin with the raw amino-acid sequence, 307 residues long: Dihydroorotate dehydrogenase B (NAD(+)), catalytic subunit (307 aa).

FMN contacts are provided by residues serine 22 and 46–47 (KT). Residues lysine 46, 70–74 (NAVGL), and asparagine 128 each bind substrate. Asparagine 128 lines the FMN pocket. Cysteine 131 serves as the catalytic Nucleophile. Lysine 166 and isoleucine 192 together coordinate FMN. A substrate-binding site is contributed by 193-194 (NT). Residues glycine 218, 244 to 245 (GG), and 266 to 267 (GT) each bind FMN.

The protein belongs to the dihydroorotate dehydrogenase family. Type 1 subfamily. As to quaternary structure, heterotetramer of 2 PyrK and 2 PyrD type B subunits. FMN is required as a cofactor.

The protein resides in the cytoplasm. It carries out the reaction (S)-dihydroorotate + NAD(+) = orotate + NADH + H(+). The protein operates within pyrimidine metabolism; UMP biosynthesis via de novo pathway; orotate from (S)-dihydroorotate (NAD(+) route): step 1/1. In terms of biological role, catalyzes the conversion of dihydroorotate to orotate with NAD(+) as electron acceptor. The chain is Dihydroorotate dehydrogenase B (NAD(+)), catalytic subunit (pyrD) from Desulforudis audaxviator (strain MP104C).